A 493-amino-acid polypeptide reads, in one-letter code: Ketol-acid reductoisomerase (NADP(+)) (493 aa).

A KARI N-terminal Rossmann domain is found at 14–208 (LDQLGRCRFM…GGHRAGVLES (195 aa)). Residues 45–48 (CGAQ), Arg-68, Arg-76, Ser-78, and 108–110 (DKQ) each bind NADP(+). His-132 is an active-site residue. Gly-158 is a binding site for NADP(+). KARI C-terminal knotted domains follow at residues 209 to 345 (SFVA…APKG) and 346 to 486 (ENIK…MTDM). Asp-217, Glu-221, Glu-390, and Glu-394 together coordinate Mg(2+). Ser-415 provides a ligand contact to substrate.

The protein belongs to the ketol-acid reductoisomerase family. The cofactor is Mg(2+).

It catalyses the reaction (2R)-2,3-dihydroxy-3-methylbutanoate + NADP(+) = (2S)-2-acetolactate + NADPH + H(+). The enzyme catalyses (2R,3R)-2,3-dihydroxy-3-methylpentanoate + NADP(+) = (S)-2-ethyl-2-hydroxy-3-oxobutanoate + NADPH + H(+). Its pathway is amino-acid biosynthesis; L-isoleucine biosynthesis; L-isoleucine from 2-oxobutanoate: step 2/4. It participates in amino-acid biosynthesis; L-valine biosynthesis; L-valine from pyruvate: step 2/4. In terms of biological role, involved in the biosynthesis of branched-chain amino acids (BCAA). Catalyzes an alkyl-migration followed by a ketol-acid reduction of (S)-2-acetolactate (S2AL) to yield (R)-2,3-dihydroxy-isovalerate. In the isomerase reaction, S2AL is rearranged via a Mg-dependent methyl migration to produce 3-hydroxy-3-methyl-2-ketobutyrate (HMKB). In the reductase reaction, this 2-ketoacid undergoes a metal-dependent reduction by NADPH to yield (R)-2,3-dihydroxy-isovalerate. The protein is Ketol-acid reductoisomerase (NADP(+)) of Histophilus somni (strain 2336) (Haemophilus somnus).